The sequence spans 317 residues: Transaldolase (317 aa).

The active-site Schiff-base intermediate with substrate is the lysine 126.

It belongs to the transaldolase family. Type 1 subfamily. As to quaternary structure, homodimer.

It is found in the cytoplasm. The enzyme catalyses D-sedoheptulose 7-phosphate + D-glyceraldehyde 3-phosphate = D-erythrose 4-phosphate + beta-D-fructose 6-phosphate. It functions in the pathway carbohydrate degradation; pentose phosphate pathway; D-glyceraldehyde 3-phosphate and beta-D-fructose 6-phosphate from D-ribose 5-phosphate and D-xylulose 5-phosphate (non-oxidative stage): step 2/3. Functionally, transaldolase is important for the balance of metabolites in the pentose-phosphate pathway. The polypeptide is Transaldolase (Burkholderia vietnamiensis (strain G4 / LMG 22486) (Burkholderia cepacia (strain R1808))).